A 375-amino-acid polypeptide reads, in one-letter code: Probable Na(+)/H(+) antiporter GerT (375 aa).

Helical transmembrane passes span 27–47 (PSVL…LGII), 89–109 (AGGI…FGLI), 112–132 (HAIF…VQTL), 145–165 (TILG…AFVM), 183–203 (IIFF…IMKM), 204–224 (LVPL…CFSF), 226–246 (YYSE…GIAI), 261–281 (PIAY…EITF), 288–308 (LWFI…GSGL), and 350–370 (ENFT…PPLL).

This sequence belongs to the monovalent cation:proton antiporter 2 (CPA2) transporter (TC 2.A.37) family.

It localises to the membrane. In terms of biological role, contributes to the success of spore outgrowth from the germinated state during alkaline or Na(+) stress. Does not have a significant role in germination. The sequence is that of Probable Na(+)/H(+) antiporter GerT (gerT) from Bacillus cereus.